A 998-amino-acid chain; its full sequence is Bifunctional glutamine synthetase adenylyltransferase/adenylyl-removing enzyme (998 aa).

The segment at methionine 1–leucine 487 is adenylyl removase. The segment at glycine 492–serine 998 is adenylyl transferase.

It belongs to the GlnE family. Requires Mg(2+) as cofactor.

The catalysed reaction is [glutamine synthetase]-O(4)-(5'-adenylyl)-L-tyrosine + phosphate = [glutamine synthetase]-L-tyrosine + ADP. It carries out the reaction [glutamine synthetase]-L-tyrosine + ATP = [glutamine synthetase]-O(4)-(5'-adenylyl)-L-tyrosine + diphosphate. Involved in the regulation of glutamine synthetase GlnA, a key enzyme in the process to assimilate ammonia. When cellular nitrogen levels are high, the C-terminal adenylyl transferase (AT) inactivates GlnA by covalent transfer of an adenylyl group from ATP to specific tyrosine residue of GlnA, thus reducing its activity. Conversely, when nitrogen levels are low, the N-terminal adenylyl removase (AR) activates GlnA by removing the adenylyl group by phosphorolysis, increasing its activity. The regulatory region of GlnE binds the signal transduction protein PII (GlnB) which indicates the nitrogen status of the cell. In Mycolicibacterium paratuberculosis (strain ATCC BAA-968 / K-10) (Mycobacterium paratuberculosis), this protein is Bifunctional glutamine synthetase adenylyltransferase/adenylyl-removing enzyme.